The primary structure comprises 180 residues: Adenine phosphoribosyltransferase (180 aa).

It belongs to the purine/pyrimidine phosphoribosyltransferase family. In terms of assembly, homodimer.

The protein localises to the cytoplasm. It carries out the reaction AMP + diphosphate = 5-phospho-alpha-D-ribose 1-diphosphate + adenine. Its pathway is purine metabolism; AMP biosynthesis via salvage pathway; AMP from adenine: step 1/1. Functionally, catalyzes a salvage reaction resulting in the formation of AMP, that is energically less costly than de novo synthesis. This chain is Adenine phosphoribosyltransferase, found in Mycobacterium avium (strain 104).